The sequence spans 406 residues: COP9 signalosome complex subunit 4 (406 aa).

Ala-2 is modified (N-acetylalanine). Lys-25 is modified (N6-acetyllysine). The region spanning 197-366 (YRRKFIEAAQ…GIVHFETREA (170 aa)) is the PCI domain.

This sequence belongs to the CSN4 family. In terms of assembly, component of the CSN complex, composed of COPS1/GPS1, COPS2, COPS3, COPS4, COPS5, COPS6, COPS7 (COPS7A or COPS7B), COPS8 and COPS9 isoform 1. In the complex, it probably interacts directly with COPS1, COPS2, COPS3, COPS5, COPS6, COPS7 (COPS7A or COPS7B) and COPS8. Interacts with TOR1A; the interaction is direct and associates TOR1A and SNAPIN with the CSN complex. Interacts with STON2; controls STON2 neddylation levels. Interacts with ERCC6.

It localises to the cytoplasm. Its subcellular location is the nucleus. It is found in the cytoplasmic vesicle. The protein resides in the secretory vesicle. The protein localises to the synaptic vesicle. Component of the COP9 signalosome complex (CSN), a complex involved in various cellular and developmental processes. The CSN complex is an essential regulator of the ubiquitin (Ubl) conjugation pathway by mediating the deneddylation of the cullin subunits of SCF-type E3 ligase complexes, leading to decrease the Ubl ligase activity of SCF-type complexes such as SCF, CSA or DDB2. Also involved in the deneddylation of non-cullin subunits such as STON2. The complex is also involved in phosphorylation of p53/TP53, c-jun/JUN, IkappaBalpha/NFKBIA, ITPK1, IRF8/ICSBP and SNAPIN, possibly via its association with CK2 and PKD kinases. CSN-dependent phosphorylation of TP53 and JUN promotes and protects degradation by the Ubl system, respectively. In Homo sapiens (Human), this protein is COP9 signalosome complex subunit 4 (COPS4).